A 94-amino-acid polypeptide reads, in one-letter code: Conotoxin Cal22a (94 aa).

The N-terminal stretch at methionine 1–glycine 24 is a signal peptide. Positions glycine 25 to alanine 44 are excised as a propeptide.

Contains 4 disulfide bonds. Expressed by the venom duct.

It is found in the secreted. In terms of biological role, probable neurotoxin with unknown target. Possibly targets ion channels. The protein is Conotoxin Cal22a of Californiconus californicus (California cone).